The chain runs to 348 residues: MRVLTIFLLFMTSIFAVQIKDVANTVGVRDNQLIGYGLVVGLNGSGDGTSSKFTLQSISNLLQGMNIKVDPNDIKSKNTAAVMVTAKLPAFAKSGDKLDITVSSMGDAKSLQGGTLLLTALRGIDGEIYAIAQGSISTGGLTPRPGGAGSHSTAATVMGGANVEREIPQNFSQNNDLTLSLKVADFKTANDIERVLNTVFGEEVAKAIDSRTVKLKKPEDLSNVDFMARVLEQDIAYKPQSKVIIDERTGTVIAGVDVEVEPVLITHKDITIKIDPNNNAVANQNEIDMKDGGFVDSSSNTLRINNAKSTVANIARMLNKLGATPNDIIAIMENLKRAGAINADLEII.

Positions 1-16 (MRVLTIFLLFMTSIFA) are cleaved as a signal peptide.

It belongs to the FlgI family. In terms of assembly, the basal body constitutes a major portion of the flagellar organelle and consists of four rings (L,P,S, and M) mounted on a central rod.

It is found in the periplasm. Its subcellular location is the bacterial flagellum basal body. Functionally, assembles around the rod to form the L-ring and probably protects the motor/basal body from shearing forces during rotation. The protein is Flagellar P-ring protein of Campylobacter jejuni subsp. doylei (strain ATCC BAA-1458 / RM4099 / 269.97).